We begin with the raw amino-acid sequence, 506 residues long: Cytochrome P450 monooxygenase TES1 (506 aa).

A helical membrane pass occupies residues 26 to 46 (MSVVLAGLILLASIYFPRFMF). Asn-167, Asn-201, Asn-298, and Asn-427 each carry an N-linked (GlcNAc...) asparagine glycan. Cys-440 provides a ligand contact to heme.

Belongs to the cytochrome P450 family. Heme is required as a cofactor.

The protein localises to the membrane. The protein operates within phytotoxin biosynthesis. Cytochrome P450 monooxygenase; part of the gene cluster that mediates the biosynthesis of the phytotoxin tentoxin, an inhibitor the F1-ATPase activity of chloroplasts, resulting in chlorosis in sensitive plants. Tentoxin is a cyclic tetrapeptide that consists of four amino acid residues: glycine (Gly), alanine (Ala), leucine (Leu), and dehydrophenylalanine (DPhe). In addition, both the Ala and DPhe residues are N-methylated. The nonribosomal peptide synthetase TES assembles tentoxin from the four substrate amino acids. The adenylation domains of each of the 4 modules are responsible for the activation of Gly, Ala, Leu and DPhe, respectively. In addition, the N-methyltransferase domains in the second and fourth modules of TES could be responsible for N-methylation of Ala and DPhe residues. Finally, the condensation domain located in the termination module probably catalyzes the formation of the intramolecular macrocyclization and then the release of tentoxin. The cytochrome P450 monooxygenase TES1 is predicted to be involved in the formation of DPhe. This is Cytochrome P450 monooxygenase TES1 from Alternaria alternata (Alternaria rot fungus).